Here is a 524-residue protein sequence, read N- to C-terminus: Magnesium/proton exchanger 2 (524 aa).

The next 11 membrane-spanning stretches (helical) occupy residues 28–48, 88–108, 125–145, 157–177, 185–205, 325–345, 349–369, 377–397, 430–450, 462–482, and 496–516; these read GVRA…LSAI, IADV…LATI, GTLV…CVVM, LGVW…LYII, VITL…LLHA, VIGI…AFIP, IAHG…IAYG, ISCV…AAGT, IYVG…LFVY, LSFS…VLVL, and MWAW…VVLS.

The protein belongs to the Ca(2+):cation antiporter (CaCA) (TC 2.A.19) family. MHX subfamily.

The protein localises to the vacuole membrane. Vacuolar transporter that exchanges protons with Mg(2+), Zn(2+) and Fe(2+) ions. May control the partitioning of Mg(2+) and Zn(2+) between plant organs. The sequence is that of Magnesium/proton exchanger 2 (MHX2) from Oryza sativa subsp. japonica (Rice).